The primary structure comprises 184 residues: Protein PLANT CADMIUM RESISTANCE 5 (184 aa).

The span at 1-26 shows a compositional bias: polar residues; the sequence is MGRPVGQTNQAQPSVQHTASPSNKVS. Positions 1-33 are disordered; the sequence is MGRPVGQTNQAQPSVQHTASPSNKVSHNGGIGK. Residues 94–114 form a helical membrane-spanning segment; that stretch reads AGLLYGALFFTGASFVYSYMF.

It belongs to the cornifelin family.

It is found in the membrane. In terms of biological role, may be involved in heavy metals transport. The sequence is that of Protein PLANT CADMIUM RESISTANCE 5 (PCR5) from Arabidopsis thaliana (Mouse-ear cress).